The sequence spans 655 residues: 1-deoxy-D-xylulose-5-phosphate synthase (655 aa).

Thiamine diphosphate contacts are provided by residues H73 and 114–116 (SHA). D145 serves as a coordination point for Mg(2+). Residues 146–147 (GA), N174, Y285, and E367 each bind thiamine diphosphate. N174 lines the Mg(2+) pocket. Positions 626–655 (RQPAIEDDPTSPGEAAPAGERAGEAIGDQR) are disordered. Residues 646-655 (RAGEAIGDQR) show a composition bias toward basic and acidic residues.

Belongs to the transketolase family. DXPS subfamily. Homodimer. It depends on Mg(2+) as a cofactor. The cofactor is thiamine diphosphate.

It catalyses the reaction D-glyceraldehyde 3-phosphate + pyruvate + H(+) = 1-deoxy-D-xylulose 5-phosphate + CO2. It participates in metabolic intermediate biosynthesis; 1-deoxy-D-xylulose 5-phosphate biosynthesis; 1-deoxy-D-xylulose 5-phosphate from D-glyceraldehyde 3-phosphate and pyruvate: step 1/1. Functionally, catalyzes the acyloin condensation reaction between C atoms 2 and 3 of pyruvate and glyceraldehyde 3-phosphate to yield 1-deoxy-D-xylulose-5-phosphate (DXP). This Frankia casuarinae (strain DSM 45818 / CECT 9043 / HFP020203 / CcI3) protein is 1-deoxy-D-xylulose-5-phosphate synthase.